A 564-amino-acid polypeptide reads, in one-letter code: Dihydroxy-acid dehydratase (564 aa).

Cys-51 provides a ligand contact to [2Fe-2S] cluster. Asp-83 is a Mg(2+) binding site. Position 124 (Cys-124) interacts with [2Fe-2S] cluster. Asp-125 and Lys-126 together coordinate Mg(2+). Position 126 is an N6-carboxylysine (Lys-126). Cys-196 lines the [2Fe-2S] cluster pocket. Glu-448 contributes to the Mg(2+) binding site. Ser-474 serves as the catalytic Proton acceptor.

It belongs to the IlvD/Edd family. Homodimer. [2Fe-2S] cluster is required as a cofactor. It depends on Mg(2+) as a cofactor.

It catalyses the reaction (2R)-2,3-dihydroxy-3-methylbutanoate = 3-methyl-2-oxobutanoate + H2O. The enzyme catalyses (2R,3R)-2,3-dihydroxy-3-methylpentanoate = (S)-3-methyl-2-oxopentanoate + H2O. Its pathway is amino-acid biosynthesis; L-isoleucine biosynthesis; L-isoleucine from 2-oxobutanoate: step 3/4. The protein operates within amino-acid biosynthesis; L-valine biosynthesis; L-valine from pyruvate: step 3/4. In terms of biological role, functions in the biosynthesis of branched-chain amino acids. Catalyzes the dehydration of (2R,3R)-2,3-dihydroxy-3-methylpentanoate (2,3-dihydroxy-3-methylvalerate) into 2-oxo-3-methylpentanoate (2-oxo-3-methylvalerate) and of (2R)-2,3-dihydroxy-3-methylbutanoate (2,3-dihydroxyisovalerate) into 2-oxo-3-methylbutanoate (2-oxoisovalerate), the penultimate precursor to L-isoleucine and L-valine, respectively. The polypeptide is Dihydroxy-acid dehydratase (Pyrobaculum calidifontis (strain DSM 21063 / JCM 11548 / VA1)).